Consider the following 182-residue polypeptide: UPF0587 protein YCR090C (182 aa).

Zn(2+)-binding residues include cysteine 36, cysteine 39, cysteine 70, and cysteine 73.

The protein belongs to the UPF0587 family.

The protein is UPF0587 protein YCR090C of Saccharomyces cerevisiae (strain ATCC 204508 / S288c) (Baker's yeast).